The sequence spans 591 residues: Aspartate--tRNA(Asp/Asn) ligase (591 aa).

E176 is an L-aspartate binding site. An aspartate region spans residues 200 to 203 (QLFK). Position 222 (R222) interacts with L-aspartate. Residues 222–224 (RDE) and Q231 each bind ATP. Residue H450 participates in L-aspartate binding. ATP is bound at residue E484. R491 provides a ligand contact to L-aspartate. Residue 536–539 (GLDR) participates in ATP binding.

This sequence belongs to the class-II aminoacyl-tRNA synthetase family. Type 1 subfamily. In terms of assembly, homodimer.

The protein resides in the cytoplasm. It carries out the reaction tRNA(Asx) + L-aspartate + ATP = L-aspartyl-tRNA(Asx) + AMP + diphosphate. Its function is as follows. Aspartyl-tRNA synthetase with relaxed tRNA specificity since it is able to aspartylate not only its cognate tRNA(Asp) but also tRNA(Asn). Reaction proceeds in two steps: L-aspartate is first activated by ATP to form Asp-AMP and then transferred to the acceptor end of tRNA(Asp/Asn). This is Aspartate--tRNA(Asp/Asn) ligase from Bacillus thuringiensis (strain Al Hakam).